We begin with the raw amino-acid sequence, 157 residues long: Deoxyuridine 5'-triphosphate nucleotidohydrolase (157 aa).

Substrate is bound by residues 76 to 78, N89, 93 to 95, and K103; these read RSG and TID.

Belongs to the dUTPase family. The cofactor is Mg(2+).

The enzyme catalyses dUTP + H2O = dUMP + diphosphate + H(+). Its pathway is pyrimidine metabolism; dUMP biosynthesis; dUMP from dCTP (dUTP route): step 2/2. Functionally, this enzyme is involved in nucleotide metabolism: it produces dUMP, the immediate precursor of thymidine nucleotides and it decreases the intracellular concentration of dUTP so that uracil cannot be incorporated into DNA. In Brucella abortus (strain 2308), this protein is Deoxyuridine 5'-triphosphate nucleotidohydrolase.